The primary structure comprises 273 residues: 4-hydroxy-tetrahydrodipicolinate reductase (273 aa).

Residue 11-16 coordinates NAD(+); that stretch reads GAGGRM. R37 provides a ligand contact to NADP(+). Residues 100 to 102 and 124 to 127 contribute to the NAD(+) site; these read GTT and AANY. H157 acts as the Proton donor/acceptor in catalysis. H158 serves as a coordination point for (S)-2,3,4,5-tetrahydrodipicolinate. The Proton donor role is filled by K161. 167-168 serves as a coordination point for (S)-2,3,4,5-tetrahydrodipicolinate; it reads GT.

Belongs to the DapB family.

The protein resides in the cytoplasm. It catalyses the reaction (S)-2,3,4,5-tetrahydrodipicolinate + NAD(+) + H2O = (2S,4S)-4-hydroxy-2,3,4,5-tetrahydrodipicolinate + NADH + H(+). The enzyme catalyses (S)-2,3,4,5-tetrahydrodipicolinate + NADP(+) + H2O = (2S,4S)-4-hydroxy-2,3,4,5-tetrahydrodipicolinate + NADPH + H(+). It participates in amino-acid biosynthesis; L-lysine biosynthesis via DAP pathway; (S)-tetrahydrodipicolinate from L-aspartate: step 4/4. Its function is as follows. Catalyzes the conversion of 4-hydroxy-tetrahydrodipicolinate (HTPA) to tetrahydrodipicolinate. This chain is 4-hydroxy-tetrahydrodipicolinate reductase, found in Acinetobacter baumannii (strain AB307-0294).